Reading from the N-terminus, the 294-residue chain is MPSLKDLRNRIASVKATQKITKAMQMVAAAKLRRAQEAAEAARPYSERMGSVLANITQAIGGGGDAPALMTGTGKDNVHLLVVCTAERGLCGGFNSQIARLARDHIRRLLADGKQVKIICVGKKGFDILRRDYASMILDRVDLREVKTLGFVNADAIAKKVIHLFNEGAFDICTLFYSQFKSVISQVPTAQQIIPAGVASAPAAAVDGGNAVYEYEPEPGEILSDLIPRNISVQVFRALLENAAGEMGAKMSAMDNATRNAGEMINKLSITYNRQRQAQITKELIEIISGAEAL.

It belongs to the ATPase gamma chain family. F-type ATPases have 2 components, CF(1) - the catalytic core - and CF(0) - the membrane proton channel. CF(1) has five subunits: alpha(3), beta(3), gamma(1), delta(1), epsilon(1). CF(0) has three main subunits: a, b and c.

It localises to the cell inner membrane. Its function is as follows. Produces ATP from ADP in the presence of a proton gradient across the membrane. The gamma chain is believed to be important in regulating ATPase activity and the flow of protons through the CF(0) complex. This Mesorhizobium japonicum (strain LMG 29417 / CECT 9101 / MAFF 303099) (Mesorhizobium loti (strain MAFF 303099)) protein is ATP synthase gamma chain.